An 890-amino-acid chain; its full sequence is MALRRSMGRPGLPPLPLPPPPRLGLLLAALASLLLPESAAAGLKLMGAPVKLTVSQGQPVKLNCSVEGMEEPDIQWVKDGAVVQNLDQLYIPVSEQHWIGFLSLKSVERSDAGRYWCQVEDGGETEISQPVWLTVEGVPFFTVEPKDLAVPPNAPFQLSCEAVGPPEPVTIVWWRGTTKIGGPAPSPSVLNVTGVTQSTMFSCEAHNLKGLASSRTATVHLQALPAAPFNITVTKLSSSNASVAWMPGADGRALLQSCTVQVTQAPGGWEVLAVVVPVPPFTCLLRDLVPATNYSLRVRCANALGPSPYADWVPFQTKGLAPASAPQNLHAIRTDSGLILEWEEVIPEAPLEGPLGPYKLSWVQDNGTQDELTVEGTRANLTGWDPQKDLIVRVCVSNAVGCGPWSQPLVVSSHDRAGQQGPPHSRTSWVPVVLGVLTALVTAAALALILLRKRRKETRFGQAFDSVMARGEPAVHFRAARSFNRERPERIEATLDSLGISDELKEKLEDVLIPEQQFTLGRMLGKGEFGSVREAQLKQEDGSFVKVAVKMLKADIIASSDIEEFLREAACMKEFDHPHVAKLVGVSLRSRAKGRLPIPMVILPFMKHGDLHAFLLASRIGENPFNLPLQTLIRFMVDIACGMEYLSSRNFIHRDLAARNCMLAEDMTVCVADFGLSRKIYSGDYYRQGCASKLPVKWLALESLADNLYTVQSDVWAFGVTMWEIMTRGQTPYAGIENAEIYNYLIGGNRLKQPPECMEDVYDLMYQCWSADPKQRPSFTCLRMELENILGQLSVLSASQDPLYINIERAEEPTAGGSLELPGRDQPYSGAGDGSGMGAVGGTPSDCRYILTPGGLAEQPGQAEHQPESPLNETQRLLLLQQGLLPHSSC.

The signal sequence occupies residues 1 to 40 (MALRRSMGRPGLPPLPLPPPPRLGLLLAALASLLLPESAA). Ig-like C2-type domains are found at residues 41 to 128 (AGLK…TEIS) and 139 to 220 (PFFT…ATVH). Topologically, residues 41–429 (AGLKLMGAPV…QGPPHSRTSW (389 aa)) are extracellular. N63 carries N-linked (GlcNAc...) asparagine glycosylation. 2 cysteine pairs are disulfide-bonded: C64-C117 and C160-C203. N-linked (GlcNAc...) asparagine glycans are attached at residues N191, N230, N240, N293, N366, and N380. 2 Fibronectin type-III domains span residues 227–320 (APFN…TKGL) and 325–416 (APQN…SHDR). The chain crosses the membrane as a helical span at residues 430–450 (VPVVLGVLTALVTAAALALIL). Over 451-890 (LRKRRKETRF…QQGLLPHSSC (440 aa)) the chain is Cytoplasmic. At S466 the chain carries Phosphoserine. The 273-residue stretch at 518-790 (FTLGRMLGKG…CLRMELENIL (273 aa)) folds into the Protein kinase domain. Residues 524-532 (LGKGEFGSV) and K550 each bind ATP. The Proton acceptor role is filled by D655. A phosphotyrosine; by autocatalysis mark is found at Y681, Y685, Y686, and Y804. Disordered stretches follow at residues 815–837 (AGGS…GSGM) and 851–871 (LTPG…ESPL). A phosphoserine mark is found at S818 and S869.

Belongs to the protein kinase superfamily. Tyr protein kinase family. AXL/UFO subfamily. As to quaternary structure, monomer and homodimer. Interacts (via N-terminus) with extracellular ligands TULP1 and GAS6. Interacts with PIK3R1; this interaction increases PI3-kinase activity. In terms of processing, autophosphorylated. Abundant in the brain and lower levels in other tissues.

It is found in the cell membrane. The catalysed reaction is L-tyrosyl-[protein] + ATP = O-phospho-L-tyrosyl-[protein] + ADP + H(+). In terms of biological role, receptor tyrosine kinase that transduces signals from the extracellular matrix into the cytoplasm by binding to several ligands including TULP1 or GAS6. Regulates many physiological processes including cell survival, migration and differentiation. Ligand binding at the cell surface induces dimerization and autophosphorylation of TYRO3 on its intracellular domain that provides docking sites for downstream signaling molecules. Following activation by ligand, interacts with PIK3R1 and thereby enhances PI3-kinase activity. Activates the AKT survival pathway, including nuclear translocation of NF-kappa-B and up-regulation of transcription of NF-kappa-B-regulated genes. TYRO3 signaling plays a role in various processes such as neuron protection from excitotoxic injury, platelet aggregation and cytoskeleton reorganization. Also plays an important role in inhibition of Toll-like receptors (TLRs)-mediated innate immune response by activating STAT1, which selectively induces production of suppressors of cytokine signaling SOCS1 and SOCS3. Functionally, (Microbial infection) Acts as a receptor for lassa virus and lymphocytic choriomeningitis virus, possibly through GAS6 binding to phosphatidyl-serine at the surface of virion envelope. Its function is as follows. (Microbial infection) Acts as a receptor for Ebolavirus, possibly through GAS6 binding to phosphatidyl-serine at the surface of virion envelope. The sequence is that of Tyrosine-protein kinase receptor TYRO3 (TYRO3) from Homo sapiens (Human).